We begin with the raw amino-acid sequence, 326 residues long: Small ribosomal subunit biogenesis GTPase RsgA (326 aa).

Residues 80–241 (LSHQMHIIAS…IIDTPGIKGF (162 aa)) enclose the CP-type G domain. GTP is bound by residues 129-132 (NKID) and 183-191 (GHSGVGKST). Cys265, Cys270, His272, and Cys278 together coordinate Zn(2+).

It belongs to the TRAFAC class YlqF/YawG GTPase family. RsgA subfamily. In terms of assembly, monomer. Associates with 30S ribosomal subunit, binds 16S rRNA. The cofactor is Zn(2+).

It is found in the cytoplasm. One of several proteins that assist in the late maturation steps of the functional core of the 30S ribosomal subunit. Helps release RbfA from mature subunits. May play a role in the assembly of ribosomal proteins into the subunit. Circularly permuted GTPase that catalyzes slow GTP hydrolysis, GTPase activity is stimulated by the 30S ribosomal subunit. The polypeptide is Small ribosomal subunit biogenesis GTPase RsgA (Flavobacterium psychrophilum (strain ATCC 49511 / DSM 21280 / CIP 103535 / JIP02/86)).